Consider the following 309-residue polypeptide: tRNA uridine(34) hydroxylase (309 aa).

In terms of domain architecture, Rhodanese spans 129–223 (SEPGTIVIDT…YLEEVPAEQS (95 aa)). Catalysis depends on Cys183, which acts as the Cysteine persulfide intermediate. Residues 288–309 (YAERQRQVELAQARGKRPHIGS) form a disordered region.

This sequence belongs to the TrhO family.

It catalyses the reaction uridine(34) in tRNA + AH2 + O2 = 5-hydroxyuridine(34) in tRNA + A + H2O. Functionally, catalyzes oxygen-dependent 5-hydroxyuridine (ho5U) modification at position 34 in tRNAs. This Mesorhizobium japonicum (strain LMG 29417 / CECT 9101 / MAFF 303099) (Mesorhizobium loti (strain MAFF 303099)) protein is tRNA uridine(34) hydroxylase.